Consider the following 194-residue polypeptide: 5'-deoxynucleotidase VV1113 (194 aa).

Substrate-binding positions include 18 to 19 and His33; that span reads RW. The 113-residue stretch at 30 to 142 folds into the HD domain; the sequence is VSEHSLQVAF…VKQADSICAY (113 aa). A divalent metal cation is bound by residues His33, His68, and Asp69. Substrate is bound by residues Asp69, 77–80, and Asp137; that span reads DLPT. Asp137 contributes to the a divalent metal cation binding site.

This sequence belongs to the 5DNU family. In terms of assembly, homodimer. Requires a divalent metal cation as cofactor.

It is found in the cytoplasm. The enzyme catalyses a 2'-deoxyribonucleoside 5'-phosphate + H2O = a 2'-deoxyribonucleoside + phosphate. Functionally, catalyzes the strictly specific dephosphorylation of 2'-deoxyribonucleoside 5'-monophosphates. The chain is 5'-deoxynucleotidase VV1113 from Vibrio vulnificus (strain YJ016).